The primary structure comprises 261 residues: Endomucin (261 aa).

A signal peptide spans 1–18 (MELLQVTILFLLPSICSS). Residues Asn-19, Asn-28, Asn-98, and Asn-104 are each glycosylated (N-linked (GlcNAc...) asparagine). Topologically, residues 19–190 (NSTGVLEAAN…TSATSRSYSS (172 aa)) are extracellular. Composition is skewed to polar residues over residues 118-134 (TLQS…SIKT) and 146-171 (ASPS…SQVI). The segment at 118–183 (TLQSSKPKTE…EGGKNASTSA (66 aa)) is disordered. N-linked (GlcNAc...) asparagine glycans are attached at residues Asn-164 and Asn-178. The chain crosses the membrane as a helical span at residues 191-211 (IILPVVIALIVITLSVFVLVG). Residues 212 to 261 (LYRMCWKADPGTPENGNDQPQSDKESVKLLTVKTISHESGEHSAQGKTKN) lie on the Cytoplasmic side of the membrane. Ser-237 bears the Phosphoserine mark.

Post-translationally, highly O-glycosylated. Sialic acid-rich glycoprotein. As to expression, expressed in heart, kidney and lung.

The protein localises to the cell membrane. It is found in the membrane. It localises to the secreted. Functionally, endothelial sialomucin, also called endomucin or mucin-like sialoglycoprotein, which interferes with the assembly of focal adhesion complexes and inhibits interaction between cells and the extracellular matrix. The polypeptide is Endomucin (EMCN) (Homo sapiens (Human)).